A 493-amino-acid chain; its full sequence is Mitochondrial distribution and morphology protein 10 (493 aa).

Belongs to the MDM10 family. As to quaternary structure, component of the ER-mitochondria encounter structure (ERMES) or MDM complex, composed of MMM1, MDM10, MDM12 and MDM34. Associates with the mitochondrial outer membrane sorting assembly machinery SAM(core) complex, which consists of SAM35, SAM37 and SAM50, to form a SAM(holo) complex.

The protein resides in the mitochondrion outer membrane. Its function is as follows. Component of the ERMES/MDM complex, which serves as a molecular tether to connect the endoplasmic reticulum and mitochondria. Components of this complex are involved in the control of mitochondrial shape and protein biogenesis and may function in phospholipid exchange. MDM10 is involved in the late assembly steps of the general translocase of the mitochondrial outer membrane (TOM complex). Functions in the TOM40-specific route of the assembly of outer membrane beta-barrel proteins, including the association of TOM40 with the receptor TOM22 and small TOM proteins. Can associate with the SAM(core) complex as well as the MDM12-MMM1 complex, both involved in late steps of the major beta-barrel assembly pathway, that is responsible for biogenesis of all outer membrane beta-barrel proteins. May act as a switch that shuttles between both complexes and channels precursor proteins into the TOM40-specific pathway. Plays a role in mitochondrial morphology and in the inheritance of mitochondria. This Saccharomyces cerevisiae (strain RM11-1a) (Baker's yeast) protein is Mitochondrial distribution and morphology protein 10.